The chain runs to 237 residues: Increased recombination centers protein 6 (237 aa).

This sequence belongs to the IRC6 family.

Its function is as follows. Involved in gross chromosomal rearrangements (GCRs) and telomere healing. The sequence is that of Increased recombination centers protein 6 (IRC6) from Saccharomyces cerevisiae (strain AWRI1631) (Baker's yeast).